A 296-amino-acid polypeptide reads, in one-letter code: Aspartate and glycine-rich protein (296 aa).

Positions 1–77 (GDGENGNGNG…GNGNGNGNGN (77 aa)) are enriched in gly residues. 2 disordered regions span residues 1 to 219 (GDGE…DNGG) and 233 to 296 (RARA…YTSY). 2 stretches are compositionally biased toward acidic residues: residues 80 to 96 (FDDDDWDDFDWDDDDWN) and 103 to 194 (NGDD…DDRW). The segment covering 198-210 (NGNGNGNGNGNGN) has biased composition (gly residues). Low complexity predominate over residues 233–243 (RARAAASAAGR). Residues 244–259 (SRGGSGGSGGSGGSGG) show a composition bias toward gly residues. The span at 270–281 (RAFASARASSGN) shows a compositional bias: low complexity.

As to expression, component of the acid-soluble and acid-insoluble organic matrix of calcified shell layers (at protein level).

It is found in the secreted. This is Aspartate and glycine-rich protein from Haliotis asinina (Donkey's ear abalone).